The following is an 87-amino-acid chain: Cell division topological specificity factor (87 aa).

Belongs to the MinE family.

Functionally, prevents the cell division inhibition by proteins MinC and MinD at internal division sites while permitting inhibition at polar sites. This ensures cell division at the proper site by restricting the formation of a division septum at the midpoint of the long axis of the cell. This is Cell division topological specificity factor from Vibrio parahaemolyticus serotype O3:K6 (strain RIMD 2210633).